We begin with the raw amino-acid sequence, 318 residues long: Pantothenate kinase (318 aa).

96–103 (GSVAVGKS) is an ATP binding site.

The protein belongs to the prokaryotic pantothenate kinase family.

It is found in the cytoplasm. The enzyme catalyses (R)-pantothenate + ATP = (R)-4'-phosphopantothenate + ADP + H(+). Its pathway is cofactor biosynthesis; coenzyme A biosynthesis; CoA from (R)-pantothenate: step 1/5. The sequence is that of Pantothenate kinase from Rhodopseudomonas palustris (strain BisA53).